The sequence spans 98 residues: MNAVTVLAFTAFALIVHDCYSEEANTTPISVKDQCANVTCRRTVDNRGKRHIDGCPPGCLCVLKGPDSKDNLDGTCYLLATTPKSTTTSTEQSFNMEE.

Positions M1 to S21 are cleaved as a signal peptide. 3 disulfide bridges follow: C35/C59, C40/C61, and C55/C76.

This sequence belongs to the RaCI family. In terms of tissue distribution, expressed in salivary glands.

Its subcellular location is the secreted. Complement inhibitor. Prevents complement-mediated C5 activation by binding to C5. Binds C5 at a different binding site than the other tick complement inhibitors OmCI and CirpT1, and the drug eculizumab. The sequence is that of Complement inhibitor RaCI2 from Rhipicephalus microplus (Cattle tick).